The primary structure comprises 1658 residues: Silent chromatin protein ESC1 (1658 aa).

Over residues 36–54 (DSKMKDQHGYSRVHNDKYR) the composition is skewed to basic and acidic residues. Disordered stretches follow at residues 36–76 (DSKM…SSHI) and 156–499 (TSFQ…LENE). Acidic residues-rich tracts occupy residues 205–214 (LENDEYELSE) and 245–254 (SNDEYAEEEG). Residues 262 to 286 (GQEQANVENATQISSSDSSEGQNYS) are compositionally biased toward polar residues. A compositionally biased stretch (acidic residues) spans 289-305 (VEMELEDDIDVESDAEK). Positions 335–352 (VIEKYESDEHKVHQRYSE) are enriched in basic and acidic residues. A compositionally biased stretch (acidic residues) spans 365 to 375 (VDDESEDEESQ). The segment covering 386–397 (VYHHNEHELDDK) has biased composition (basic and acidic residues). The span at 398–407 (ELIEDIESSD) shows a compositional bias: acidic residues. Low complexity predominate over residues 408–417 (SESQSAQESE). Basic and acidic residues-rich tracts occupy residues 425-435 (EYKMKNEKSTS), 442-461 (SESR…KVEQ), and 471-482 (DDIIRSSLDKNF). Phosphothreonine is present on threonine 500. Serine 532 is subject to Phosphoserine. Disordered regions lie at residues 550–584 (SRNS…DESE) and 589–608 (LKDF…GDLS). Polar residues predominate over residues 568–577 (GHSNGSNLSG). Phosphoserine is present on residues serine 579, serine 583, serine 608, and serine 662. Disordered regions lie at residues 770–819 (SKET…EDNT), 863–964 (EMSS…VKGT), and 1082–1115 (ENNT…GSAK). A compositionally biased stretch (polar residues) spans 800–812 (QSKNFPGVANSTD). A phosphoserine mark is found at serine 865 and serine 866. Basic and acidic residues predominate over residues 869–878 (ECVKQNDDGS). Over residues 879–905 (KTQISFSTDSPDNFQESNDNTEFSSTK) the composition is skewed to polar residues. A phosphoserine mark is found at serine 888 and serine 911. Residues 918–931 (SLKKELTKAEVVDK) show a composition bias toward basic and acidic residues. A compositionally biased stretch (acidic residues) spans 932-956 (LDEEESEDSYEQDYADPEPGNDEGS). Phosphoserine occurs at positions 937, 1092, 1096, 1098, 1166, 1176, and 1178. Residues 1082–1096 (ENNTNMHDQVSQACS) show a composition bias toward polar residues. Over residues 1097–1115 (DSDRDQDSTAEKNVEGSAK) the composition is skewed to basic and acidic residues. Polar residues predominate over residues 1197–1207 (STDASVNMKSV). The interval 1197–1216 (STDASVNMKSVSSKERDSDE) is disordered. 2 positions are modified to phosphoserine: serine 1214 and serine 1254. Over residues 1261–1272 (VKDKENLHKSEE) the composition is skewed to basic and acidic residues. The interval 1261-1315 (VKDKENLHKSEEPLVEGLQSEQHFEKKDHSENEEEFDTIYGDITSANIHSNAPDD) is disordered. Serine 1290, serine 1326, and serine 1332 each carry phosphoserine. Disordered stretches follow at residues 1334-1482 (RLIE…TSPE) and 1503-1658 (PATT…SVDK). Over residues 1335 to 1366 (LIEDSRRGKNQEESDEVNTSRERDLTFEKSVN) the composition is skewed to basic and acidic residues. A phosphoserine mark is found at serine 1403, serine 1409, serine 1450, and serine 1454. Positions 1407–1423 (LNSEPEEAELYELEIEG) are enriched in acidic residues. The span at 1463–1479 (YPYSNSENITAEKSAPT) shows a compositional bias: polar residues. The segment covering 1507–1537 (LEKHDKTNVTSVLDDRSEHLSSHDVDNEPHD) has biased composition (basic and acidic residues). At serine 1539 the chain carries Phosphoserine. 2 stretches are compositionally biased toward basic and acidic residues: residues 1550–1564 (PEHQ…VEVK) and 1575–1591 (VLEE…DKSS). Serine 1590 and serine 1591 each carry phosphoserine. Positions 1607–1626 (TKAKKKSRKRNYNSRRRKRK) are enriched in basic residues. The span at 1648–1658 (RGQNTHPSVDK) shows a compositional bias: polar residues.

As to quaternary structure, interacts with SIR4.

The protein localises to the nucleus. Its function is as follows. Involved in the clustering of telomeres at the nuclear periphery, forming discrete subcompartments that accumulate a complex of histone-binding silencing factors like SIR4. Required for SIR4-mediated anchoring and partitioning of plasmids. The protein is Silent chromatin protein ESC1 (ESC1) of Saccharomyces cerevisiae (strain ATCC 204508 / S288c) (Baker's yeast).